The following is a 20-amino-acid chain: U27-ctenitoxin-Pn1a (20 aa).

Residues 1–20 (LAKRADICQPGKTSQRACET) are disordered. Residues 11 to 20 (GKTSQRACET) show a composition bias toward polar residues.

Post-translationally, contains 4 disulfide bonds. As to expression, expressed by the venom gland.

The protein localises to the secreted. Has a vascular smooth muscle contracting activity. Causes short-lived contractions of both arterial and venous rabbit vessels. This Phoneutria nigriventer (Brazilian armed spider) protein is U27-ctenitoxin-Pn1a.